The following is a 542-amino-acid chain: TNF receptor-associated factor 6 (542 aa).

Residues 32–54 form a disordered region; the sequence is ESFLSPTENPSTISVSSSMPPDQ. Residues 35–52 are compositionally biased toward polar residues; it reads LSPTENPSTISVSSSMPP. The segment at 71-110 adopts an RING-type; degenerate zinc-finger fold; it reads CPICLMGLRSAVQTPCGHRFCDSCIRKSIRDTGQKCPVDN. 2 consecutive TRAF-type zinc fingers follow at residues 151–203 and 204–260; these read KHLS…AVKQ and NHEQ…NELA. The stretch at 311–373 forms a coiled coil; it reads QCKQELLNLR…STRELEAQQY (63 aa). Positions 374-520 constitute an MATH domain; sequence QGIYVWRVEN…EDVLLVRCEV (147 aa). 489–496 lines the substrate pocket; the sequence is PKGFGYVT.

This sequence belongs to the TNF receptor-associated factor family. A subfamily. In terms of assembly, homotrimer. Homooligomer.

Its subcellular location is the cytoplasm. The protein localises to the cell cortex. The protein resides in the nucleus. It localises to the lipid droplet. It catalyses the reaction S-ubiquitinyl-[E2 ubiquitin-conjugating enzyme]-L-cysteine + [acceptor protein]-L-lysine = [E2 ubiquitin-conjugating enzyme]-L-cysteine + N(6)-ubiquitinyl-[acceptor protein]-L-lysine.. The protein operates within protein modification; protein ubiquitination. In terms of biological role, E3 ubiquitin ligase that, together with UBE2N and UBE2V1, mediates the synthesis of 'Lys-63'-linked-polyubiquitin chains conjugated to proteins, such as IKBKG, IRAK1, AKT1 and AKT2. Also mediates ubiquitination of free/unanchored polyubiquitin chain that leads to MAP3K7 activation. The sequence is that of TNF receptor-associated factor 6 (traf6) from Danio rerio (Zebrafish).